The primary structure comprises 147 residues: Acidic phospholipase A2 S3-24 (147 aa).

Positions M1–A19 are cleaved as a signal peptide. The propeptide occupies S20–L27. Cystine bridges form between C38/C99, C54/C146, C56/C72, C71/C127, C78/C120, C88/C113, and C106/C118. Residues Y55, G57, and G59 each contribute to the Ca(2+) site. H75 is a catalytic residue. D76 is a Ca(2+) binding site. D121 is a catalytic residue.

Belongs to the phospholipase A2 family. Group I subfamily. D49 sub-subfamily. It depends on Ca(2+) as a cofactor. As to expression, expressed by the venom gland.

It localises to the secreted. The enzyme catalyses a 1,2-diacyl-sn-glycero-3-phosphocholine + H2O = a 1-acyl-sn-glycero-3-phosphocholine + a fatty acid + H(+). Its function is as follows. Snake venom phospholipase A2 (PLA2) that inhibits collagen-induced platelet aggregation. PLA2 catalyzes the calcium-dependent hydrolysis of the 2-acyl groups in 3-sn-phosphoglycerides. This is Acidic phospholipase A2 S3-24 from Austrelaps superbus (Lowland copperhead snake).